A 79-amino-acid polypeptide reads, in one-letter code: MKTLLLTLVMVTIMCLDLGYTLTCYKGYHDTVVCKPHETICYRYLVPATHGNAIPARGCGTSCPGGNHPVCCSTDLCNK.

A signal peptide spans 1–21 (MKTLLLTLVMVTIMCLDLGYT). 4 cysteine pairs are disulfide-bonded: cysteine 24–cysteine 41, cysteine 34–cysteine 59, cysteine 63–cysteine 71, and cysteine 72–cysteine 77.

This sequence belongs to the three-finger toxin family. Short-chain subfamily. Type III alpha-neurotoxin sub-subfamily. Expressed by the venom gland.

The protein resides in the secreted. In terms of biological role, binds with high affinity to muscle nicotinic acetylcholine receptor (nAChR) and hinders acetylcholine binding to the receptor, thereby impairing neuromuscular transmission. Competes with the binding of alpha-bungarotoxin on muscle AChR (from Torpedo) with an IC(50) of 0.30 uM. Causes muscle paralysis, spasms and increased respiration. In Pseudonaja textilis (Eastern brown snake), this protein is Short neurotoxin 3.